Consider the following 113-residue polypeptide: Large ribosomal subunit protein uL24 (113 aa).

This sequence belongs to the universal ribosomal protein uL24 family. In terms of assembly, part of the 50S ribosomal subunit.

In terms of biological role, one of two assembly initiator proteins, it binds directly to the 5'-end of the 23S rRNA, where it nucleates assembly of the 50S subunit. One of the proteins that surrounds the polypeptide exit tunnel on the outside of the subunit. The chain is Large ribosomal subunit protein uL24 from Micrococcus luteus (strain ATCC 4698 / DSM 20030 / JCM 1464 / CCM 169 / CCUG 5858 / IAM 1056 / NBRC 3333 / NCIMB 9278 / NCTC 2665 / VKM Ac-2230) (Micrococcus lysodeikticus).